The primary structure comprises 561 residues: MAKERCLKKSFQDSLEDIKKRMKEKRNKNLAEIGKRRSFIAAPCQIITNTSTLLKNYQDNNKMLVLALENEKSKVKEAQDIILQLRKECYYLTCQLYALKGKLTSQQTVEPAQNQEICSSGMDPNSDDSSRNLFVKDLPQIPLEETELPGQGESFQIEDQIPTIPQDTLGVDFDSGEAKSTDNVLPRTVSVRSSLKKHCNSICQFDSLDDFETSHLAGKSFEFERVGFLDPLVNMHIPENVQHNACQWSKDQVNLSPKLIQPGTFTKTKEDILESKSEQTKSKQRDTQERKREEKRKANRRKSKRMSKYKENKSENKKTVPQKKMHKSVSSNDAYNFNLEEGVHLTPFRQKVSNDSNREENNESEVSLCESSGSGDDSDDLYLPTCKYIQNPTSNSDRPVTRPLAKRALKYTDEKETEGSKPTKTPTTTPPETQQSPHLSLKDITNVSLYPVVKIRRLSLSPKKNKASPAVALPKRRCTASVNYKEPTLASKLRRGDPFTDLCFLNSPIFKQKKDLRRSKKRALEVSPAKEAIFILYYVREFVSRFPDCRKCKLETHICLR.

A necessary for interaction with PPP2CA and PPP2R1A region spans residues 1 to 176 (MAKERCLKKS…DTLGVDFDSG (176 aa)). Positions 7 to 89 (LKKSFQDSLE…DIILQLRKEC (83 aa)) form a coiled coil. Ser14 carries the post-translational modification Phosphoserine; by NEK2. The D-box 1 signature appears at 192–200 (RSSLKKHCN). Residue Ser256 is modified to Phosphoserine. 2 disordered regions span residues 260–331 (IQPG…SVSS) and 348–441 (FRQK…HLSL). Over residues 267–296 (KTKEDILESKSEQTKSKQRDTQERKREEKR) the composition is skewed to basic and acidic residues. Residues 273–313 (LESKSEQTKSKQRDTQERKREEKRKANRRKSKRMSKYKENK) are a coiled coil. Positions 297–307 (KANRRKSKRMS) are enriched in basic residues. The span at 308–318 (KYKENKSENKK) shows a compositional bias: basic and acidic residues. A KEN box motif is present at residues 310–312 (KEN). Residues 364–375 (SEVSLCESSGSG) are compositionally biased toward low complexity. The segment covering 388 to 398 (YIQNPTSNSDR) has biased composition (polar residues). Positions 410–421 (KYTDEKETEGSK) are enriched in basic and acidic residues. The span at 422–433 (PTKTPTTTPPET) shows a compositional bias: low complexity. Ser436 carries the post-translational modification Phosphoserine. A D-box 2 motif is present at residues 438 to 446 (HLSLKDITN). A PXVXL/I motif motif is present at residues 451–455 (PVVKI). The D-box 3 motif lies at 457-465 (RLSLSPKKN). Phosphoserine; by NEK2 is present on Ser507.

This sequence belongs to the shugoshin family. As to quaternary structure, interacts with PPP2CA (or PPP2CB), PPP2R1B, PPP2R5A, PPP2R5B, PPP2R5C, PPP2R5D, PPP2R5E, SET, LRRC59, RBM10 (or RBM5), RPL10A, RPL28, RPL7, RPL7A and RPLP1. Interaction with protein phosphatase 2A occurs most probably through direct binding to the regulatory B56 subunits: PPP2R1B, PPP2R5A, PPP2R5B, PPP2R5C, PPP2R5D, PPP2R5E. Interacts with PPP2R1A and NEK2. Isoform 3 interacts with PLK1. Interacts with CDCA8. Post-translationally, ubiquitinated and degraded during mitotic exit by APC/C-Cdh1. In terms of processing, phosphorylation by NEK2 is essential for chromosome congression in mitosis and for the proper attachment of spindle microtubule to the kinetochore. Phosphorylated by PLK1 and AUKRB. Widely expressed. Highly expressed in testis. Expressed in lung, small intestine, breast, liver and placenta. Strongly overexpressed in 90% of breast cancers tested.

The protein localises to the nucleus. Its subcellular location is the chromosome. The protein resides in the centromere. It localises to the kinetochore. It is found in the cytoplasm. The protein localises to the cytoskeleton. Its subcellular location is the spindle pole. The protein resides in the microtubule organizing center. It localises to the centrosome. It is found in the nucleus speckle. Functionally, plays a central role in chromosome cohesion during mitosis by preventing premature dissociation of cohesin complex from centromeres after prophase, when most of cohesin complex dissociates from chromosomes arms. May act by preventing phosphorylation of the STAG2 subunit of cohesin complex at the centromere, ensuring cohesin persistence at centromere until cohesin cleavage by ESPL1/separase at anaphase. Essential for proper chromosome segregation during mitosis and this function requires interaction with PPP2R1A. Its phosphorylated form is necessary for chromosome congression and for the proper attachment of spindle microtubule to the kinetochore. Necessary for kinetochore localization of PLK1 and CENPF. May play a role in the tension sensing mechanism of the spindle-assembly checkpoint by regulating PLK1 kinetochore affinity. Isoform 3 plays a role in maintaining centriole cohesion involved in controlling spindle pole integrity. Involved in centromeric enrichment of AUKRB in prometaphase. In Homo sapiens (Human), this protein is Shugoshin 1.